The primary structure comprises 213 residues: Probable transaldolase (213 aa).

Lysine 83 acts as the Schiff-base intermediate with substrate in catalysis.

Belongs to the transaldolase family. Type 3B subfamily.

It is found in the cytoplasm. The catalysed reaction is D-sedoheptulose 7-phosphate + D-glyceraldehyde 3-phosphate = D-erythrose 4-phosphate + beta-D-fructose 6-phosphate. It functions in the pathway carbohydrate degradation; pentose phosphate pathway; D-glyceraldehyde 3-phosphate and beta-D-fructose 6-phosphate from D-ribose 5-phosphate and D-xylulose 5-phosphate (non-oxidative stage): step 2/3. Functionally, transaldolase is important for the balance of metabolites in the pentose-phosphate pathway. This Geobacillus kaustophilus (strain HTA426) protein is Probable transaldolase.